A 311-amino-acid chain; its full sequence is Probable deoxyhypusine synthase (311 aa).

Lys-284 functions as the Nucleophile in the catalytic mechanism.

It belongs to the deoxyhypusine synthase family. NAD(+) is required as a cofactor.

The enzyme catalyses [eIF5A protein]-L-lysine + spermidine = [eIF5A protein]-deoxyhypusine + propane-1,3-diamine. It functions in the pathway protein modification; eIF5A hypusination. Catalyzes the NAD-dependent oxidative cleavage of spermidine and the subsequent transfer of the butylamine moiety of spermidine to the epsilon-amino group of a specific lysine residue of the eIF-5A precursor protein to form the intermediate deoxyhypusine residue. This is Probable deoxyhypusine synthase from Picrophilus torridus (strain ATCC 700027 / DSM 9790 / JCM 10055 / NBRC 100828 / KAW 2/3).